Consider the following 629-residue polypeptide: Chaperone protein HtpG (629 aa).

The segment at 1–336 (MSSTENNGTA…TEDLSLNVSR (336 aa)) is a; substrate-binding. The b stretch occupies residues 337–549 (EMVQSSPVMA…KDAIDSQLER (213 aa)). A c region spans residues 550-629 (MMKMMNTPMP…ELIEAATLTR (80 aa)).

The protein belongs to the heat shock protein 90 family. In terms of assembly, homodimer.

It localises to the cytoplasm. Functionally, molecular chaperone. Has ATPase activity. The chain is Chaperone protein HtpG from Chlorobium chlorochromatii (strain CaD3).